The sequence spans 484 residues: Aldehyde dehydrogenase family 3 member H1 (484 aa).

196-201 (GSSKIG) lines the NAD(+) pocket. Glutamate 218 (proton acceptor) is an active-site residue. Cysteine 253 acts as the Nucleophile in catalysis.

Belongs to the aldehyde dehydrogenase family. Homodimer and homomultimer. In terms of tissue distribution, isoform alpha is expressed in expanded leaves and flowers. Detected in seedlings. Isoform beta is mainly expressed in flowers. Detected in leaves and seedlings.

It catalyses the reaction an aldehyde + NAD(+) + H2O = a carboxylate + NADH + 2 H(+). With respect to regulation, thiol-based regulation. Inactivation after dimerization under oxidizing conditions. In terms of biological role, involved in oxidative stress tolerance by detoxifying reactive aldehydes derived from lipid peroxidation. Medium- to long-chain saturated aldehydes are preferred substrates, while the short-chain aldehyde propanal is a weak substrate. Is strictely NAD(+) specific. In Arabidopsis thaliana (Mouse-ear cress), this protein is Aldehyde dehydrogenase family 3 member H1 (ALDH3H1).